Here is a 163-residue protein sequence, read N- to C-terminus: Bursicon (163 aa).

The first 23 residues, 1 to 23, serve as a signal peptide directing secretion; sequence MKSTFLVVLELAFFLLPGRVLYA. 5 disulfide bridges follow: Cys-39-Cys-88, Cys-53-Cys-102, Cys-63-Cys-123, Cys-67-Cys-125, and Cys-85-Cys-128. Residues 39 to 129 enclose the CTCK domain; it reads CQVTPVIHVL…PLECMCRPCT (91 aa).

As to quaternary structure, heterodimer of burs and pburs.

The protein localises to the secreted. Final heterodimeric neurohormone released at the end of the molting cycle, involved in the sclerotization (tanning) of the insect cuticle, melanization and wing spreading. This chain is Bursicon (burs124), found in Anopheles gambiae (African malaria mosquito).